We begin with the raw amino-acid sequence, 200 residues long: Protein GrpE (200 aa).

Positions 1–11 are enriched in polar residues; it reads MSNQTNKAQDN. The interval 1 to 29 is disordered; the sequence is MSNQTNKAQDNQVEEIVEGELLNENGTEA.

Belongs to the GrpE family. As to quaternary structure, homodimer.

It localises to the cytoplasm. Participates actively in the response to hyperosmotic and heat shock by preventing the aggregation of stress-denatured proteins, in association with DnaK and GrpE. It is the nucleotide exchange factor for DnaK and may function as a thermosensor. Unfolded proteins bind initially to DnaJ; upon interaction with the DnaJ-bound protein, DnaK hydrolyzes its bound ATP, resulting in the formation of a stable complex. GrpE releases ADP from DnaK; ATP binding to DnaK triggers the release of the substrate protein, thus completing the reaction cycle. Several rounds of ATP-dependent interactions between DnaJ, DnaK and GrpE are required for fully efficient folding. This Shewanella halifaxensis (strain HAW-EB4) protein is Protein GrpE.